An 88-amino-acid chain; its full sequence is Small cysteine and glycine repeat-containing protein 1 (88 aa).

The 10 X 2 AA repeats of CG stretch occupies residues 4 to 72 (CGCGGCGGCG…TCSSCGYSCG (69 aa)).

The protein belongs to the KRTAP type 28 family.

Its function is as follows. In the hair cortex, hair keratin intermediate filaments are embedded in an interfilamentous matrix, consisting of hair keratin-associated proteins (KRTAP), which are essential for the formation of a rigid and resistant hair shaft through their extensive disulfide bond cross-linking with abundant cysteine residues of hair keratins. The matrix proteins include the high-sulfur and high-glycine-tyrosine keratins. This is Small cysteine and glycine repeat-containing protein 1 from Homo sapiens (Human).